The chain runs to 308 residues: Elongation factor Ts (308 aa).

Positions 80 to 83 (TDFV) are involved in Mg(2+) ion dislocation from EF-Tu.

The protein belongs to the EF-Ts family.

The protein localises to the cytoplasm. Associates with the EF-Tu.GDP complex and induces the exchange of GDP to GTP. It remains bound to the aminoacyl-tRNA.EF-Tu.GTP complex up to the GTP hydrolysis stage on the ribosome. In Rhizobium rhizogenes (strain K84 / ATCC BAA-868) (Agrobacterium radiobacter), this protein is Elongation factor Ts.